The primary structure comprises 85 residues: RNA-binding protein Hfq (85 aa).

The Sm domain occupies 10-69; that stretch reads DPFLNILRKEHVPVSIYLVNGIKLQGQIESFDQYVVLLKNTVTQMVYKHAISTVVPARPV.

Belongs to the Hfq family. As to quaternary structure, homohexamer.

RNA chaperone that binds small regulatory RNA (sRNAs) and mRNAs to facilitate mRNA translational regulation in response to envelope stress, environmental stress and changes in metabolite concentrations. Also binds with high specificity to tRNAs. The protein is RNA-binding protein Hfq of Laribacter hongkongensis (strain HLHK9).